We begin with the raw amino-acid sequence, 186 residues long: Astacin-like metalloprotease toxin 5 (186 aa).

In terms of domain architecture, Peptidase M12A spans N1–L186. 2 disulfide bridges follow: C42/C177 and C63/C84. Zn(2+) is bound at residue H92. E93 is a catalytic residue. Zn(2+)-binding residues include H96 and H102. N122 is a glycosylation site (N-linked (GlcNAc...) asparagine).

Monomer. It depends on Zn(2+) as a cofactor. In terms of tissue distribution, expressed by the venom gland.

It is found in the secreted. Its activity is regulated as follows. Inhibited by 1,10-phenanthroline. In terms of biological role, zinc metalloprotease. Provoques deadhesion of endothelial cells from cell cultures, and also degradation of fibronectin, fibrinogen and gelatin in vitro. Its role in the venom is not fully understood but it might act as a spreading factor that facilitates diffusion of other venom toxins. Alternatively, it might be involved in the proteolytic processing of other venom toxins or it might play a role in extra-oral digestion of prey. The chain is Astacin-like metalloprotease toxin 5 from Loxosceles gaucho (Spider).